Consider the following 122-residue polypeptide: Large ribosomal subunit protein uL14c (122 aa).

The protein belongs to the universal ribosomal protein uL14 family. As to quaternary structure, part of the 50S ribosomal subunit.

The protein localises to the plastid. Binds to 23S rRNA. This chain is Large ribosomal subunit protein uL14c, found in Cuscuta reflexa (Southern Asian dodder).